Here is a 76-residue protein sequence, read N- to C-terminus: Defensin-like protein 163 (76 aa).

Positions 1–27 are cleaved as a signal peptide; that stretch reads MAKLIYSYLFISMFVLSVLLALPNAEG. Cystine bridges form between Cys-33/Cys-76, Cys-43/Cys-62, Cys-48/Cys-70, and Cys-52/Cys-72.

This sequence belongs to the DEFL family.

The protein resides in the secreted. In Arabidopsis thaliana (Mouse-ear cress), this protein is Defensin-like protein 163 (LCR24).